Consider the following 410-residue polypeptide: Lipoyl synthase, mitochondrial (410 aa).

[4Fe-4S] cluster-binding residues include Cys-134, Cys-139, Cys-145, Cys-165, Cys-169, Cys-172, and Ser-390. The region spanning 148–379 (AGKSTAATAT…AKIGNDLGFL (232 aa)) is the Radical SAM core domain.

It belongs to the radical SAM superfamily. Lipoyl synthase family. [4Fe-4S] cluster is required as a cofactor.

Its subcellular location is the mitochondrion. It carries out the reaction [[Fe-S] cluster scaffold protein carrying a second [4Fe-4S](2+) cluster] + N(6)-octanoyl-L-lysyl-[protein] + 2 oxidized [2Fe-2S]-[ferredoxin] + 2 S-adenosyl-L-methionine + 4 H(+) = [[Fe-S] cluster scaffold protein] + N(6)-[(R)-dihydrolipoyl]-L-lysyl-[protein] + 4 Fe(3+) + 2 hydrogen sulfide + 2 5'-deoxyadenosine + 2 L-methionine + 2 reduced [2Fe-2S]-[ferredoxin]. The protein operates within protein modification; protein lipoylation via endogenous pathway; protein N(6)-(lipoyl)lysine from octanoyl-[acyl-carrier-protein]: step 2/2. In terms of biological role, catalyzes the radical-mediated insertion of two sulfur atoms into the C-6 and C-8 positions of the octanoyl moiety bound to the lipoyl domains of lipoate-dependent enzymes, thereby converting the octanoylated domains into lipoylated derivatives. This is Lipoyl synthase, mitochondrial from Schistosoma mansoni (Blood fluke).